The chain runs to 84 residues: Small ribosomal subunit protein uS17 (84 aa).

Belongs to the universal ribosomal protein uS17 family. As to quaternary structure, part of the 30S ribosomal subunit.

One of the primary rRNA binding proteins, it binds specifically to the 5'-end of 16S ribosomal RNA. The polypeptide is Small ribosomal subunit protein uS17 (Yersinia enterocolitica serotype O:8 / biotype 1B (strain NCTC 13174 / 8081)).